Consider the following 741-residue polypeptide: Catalase-peroxidase (741 aa).

Residues W86–Y208 constitute a cross-link (tryptophyl-tyrosyl-methioninium (Trp-Tyr) (with M-234)). H87 (proton acceptor) is an active-site residue. The segment at residues Y208–M234 is a cross-link (tryptophyl-tyrosyl-methioninium (Tyr-Met) (with W-86)). A heme b-binding site is contributed by H249.

The protein belongs to the peroxidase family. Peroxidase/catalase subfamily. As to quaternary structure, homodimer or homotetramer. Heme b is required as a cofactor. In terms of processing, formation of the three residue Trp-Tyr-Met cross-link is important for the catalase, but not the peroxidase activity of the enzyme.

It carries out the reaction H2O2 + AH2 = A + 2 H2O. It catalyses the reaction 2 H2O2 = O2 + 2 H2O. Bifunctional enzyme with both catalase and broad-spectrum peroxidase activity. Also displays NADH oxidase, INH lyase and isonicotinoyl-NAD synthase activities. The polypeptide is Catalase-peroxidase (Archaeoglobus fulgidus (strain ATCC 49558 / DSM 4304 / JCM 9628 / NBRC 100126 / VC-16)).